Here is a 264-residue protein sequence, read N- to C-terminus: Endonuclease V (264 aa).

Mg(2+)-binding residues include Asp-72 and Asp-137.

Belongs to the endonuclease V family. Mg(2+) is required as a cofactor.

It is found in the cytoplasm. The catalysed reaction is Endonucleolytic cleavage at apurinic or apyrimidinic sites to products with a 5'-phosphate.. Its function is as follows. DNA repair enzyme involved in the repair of deaminated bases. Selectively cleaves double-stranded DNA at the second phosphodiester bond 3' to a deoxyinosine leaving behind the intact lesion on the nicked DNA. The protein is Endonuclease V of Halobacterium salinarum (strain ATCC 700922 / JCM 11081 / NRC-1) (Halobacterium halobium).